Reading from the N-terminus, the 319-residue chain is 4-hydroxy-3-methylbut-2-enyl diphosphate reductase (319 aa).

Residue cysteine 17 coordinates [4Fe-4S] cluster. Residues histidine 46 and histidine 79 each coordinate (2E)-4-hydroxy-3-methylbut-2-enyl diphosphate. Positions 46 and 79 each coordinate dimethylallyl diphosphate. Residues histidine 46 and histidine 79 each coordinate isopentenyl diphosphate. Position 101 (cysteine 101) interacts with [4Fe-4S] cluster. Position 129 (histidine 129) interacts with (2E)-4-hydroxy-3-methylbut-2-enyl diphosphate. Histidine 129 is a binding site for dimethylallyl diphosphate. Position 129 (histidine 129) interacts with isopentenyl diphosphate. The active-site Proton donor is the glutamate 131. Threonine 170 serves as a coordination point for (2E)-4-hydroxy-3-methylbut-2-enyl diphosphate. Cysteine 200 contacts [4Fe-4S] cluster. Serine 228, serine 229, asparagine 230, and serine 273 together coordinate (2E)-4-hydroxy-3-methylbut-2-enyl diphosphate. The dimethylallyl diphosphate site is built by serine 228, serine 229, asparagine 230, and serine 273. Isopentenyl diphosphate-binding residues include serine 228, serine 229, asparagine 230, and serine 273.

Belongs to the IspH family. Requires [4Fe-4S] cluster as cofactor.

It carries out the reaction isopentenyl diphosphate + 2 oxidized [2Fe-2S]-[ferredoxin] + H2O = (2E)-4-hydroxy-3-methylbut-2-enyl diphosphate + 2 reduced [2Fe-2S]-[ferredoxin] + 2 H(+). It catalyses the reaction dimethylallyl diphosphate + 2 oxidized [2Fe-2S]-[ferredoxin] + H2O = (2E)-4-hydroxy-3-methylbut-2-enyl diphosphate + 2 reduced [2Fe-2S]-[ferredoxin] + 2 H(+). It functions in the pathway isoprenoid biosynthesis; dimethylallyl diphosphate biosynthesis; dimethylallyl diphosphate from (2E)-4-hydroxy-3-methylbutenyl diphosphate: step 1/1. The protein operates within isoprenoid biosynthesis; isopentenyl diphosphate biosynthesis via DXP pathway; isopentenyl diphosphate from 1-deoxy-D-xylulose 5-phosphate: step 6/6. In terms of biological role, catalyzes the conversion of 1-hydroxy-2-methyl-2-(E)-butenyl 4-diphosphate (HMBPP) into a mixture of isopentenyl diphosphate (IPP) and dimethylallyl diphosphate (DMAPP). Acts in the terminal step of the DOXP/MEP pathway for isoprenoid precursor biosynthesis. The sequence is that of 4-hydroxy-3-methylbut-2-enyl diphosphate reductase from Cereibacter sphaeroides (strain ATCC 17029 / ATH 2.4.9) (Rhodobacter sphaeroides).